A 283-amino-acid chain; its full sequence is Bis(5'-nucleosyl)-tetraphosphatase, symmetrical (283 aa).

The protein belongs to the Ap4A hydrolase family.

It carries out the reaction P(1),P(4)-bis(5'-adenosyl) tetraphosphate + H2O = 2 ADP + 2 H(+). Hydrolyzes diadenosine 5',5'''-P1,P4-tetraphosphate to yield ADP. The polypeptide is Bis(5'-nucleosyl)-tetraphosphatase, symmetrical (Pseudomonas paraeruginosa (strain DSM 24068 / PA7) (Pseudomonas aeruginosa (strain PA7))).